We begin with the raw amino-acid sequence, 316 residues long: uncharacterized protein (316 aa).

The interval 1 to 34 (MATKRKIGDGYSSSDDNQPKRERSEGGEDQQLVP) is disordered. A compositionally biased stretch (basic and acidic residues) spans 17–26 (NQPKRERSEG).

This is an uncharacterized protein from Lepidoptera (butterflies and moths).